Reading from the N-terminus, the 180-residue chain is uncharacterized protein (180 aa).

One can recognise a Nudix hydrolase domain in the interval 35–163 (LRHRATYIVV…TPDSLKALAL (129 aa)). A Nudix box motif is present at residues 72 to 94 (GGVVQADEQLLESARREAEEELG). Residues Glu88 and Glu92 each coordinate Mg(2+).

It belongs to the Nudix hydrolase family. Mg(2+) serves as cofactor.

This is an uncharacterized protein from Shigella flexneri.